Reading from the N-terminus, the 372-residue chain is MWPFASVPAGAKCRLVETLPENMDFRSDHLTTFECFNEIITLAKKYIYIASFCCNPLSTTRGALIFDKLKEASEKGIKIIVLLDERGKRNLGELQSHCPDINFITVNIDKKNNVGLLLGCFWVSDDERCYVGNASFTGGSIHTIKTLGVYSDYPPLATDLRRRFDTFKAFNSAKNSWLNLCSAACCLPVSTAYHIKNPIGGVFFTDSPEHLLGYSRDLDTDVVIDKLRSAKTSIDIEHLAIVPTTRVDGNSYYWPDIYNSIIEAAINRGVKIRLLVGNWDKNDVYSMATARSLDALCVQNDLSVKVFTIQNNTKLLIVDDEYVHITSANFDGTHYQNHGFVSFNSIDKQLVSEAKKIFERDWVSSHSKSLKI.

Positions Y153 to L156 match the YPPL motif. S-palmitoyl cysteine; by host attachment occurs at residues C185 and C186. Residues F307–H334 form the PLD phosphodiesterase domain.

It belongs to the orthopoxvirus OPG057 family. In terms of assembly, interacts with protein OPG190. Palmitoylated. Attachment of the palmitate moiety is essential for correct intracellular targeting and protein function.

Its subcellular location is the virion membrane. The protein localises to the host Golgi apparatus. It localises to the host trans-Golgi network. The protein resides in the host endoplasmic reticulum membrane. The catalysed reaction is a 1,2-diacyl-sn-glycero-3-phosphocholine + H2O = a 1,2-diacyl-sn-glycero-3-phosphate + choline + H(+). Major envelope protein that plays a role in the biogenesis of the viral double membrane and in egress of virus from the host cell. Produces the wrapped form of virus that is required for cell-to-cell spread. Acts as a lipase with broad specificity including phospholipase C, phospholipase A, and triacylglycerol lipase activities. This Vaccinia virus (strain Copenhagen) (VACV) protein is Envelope phospholipase OPG057 (OPG057).